Here is a 145-residue protein sequence, read N- to C-terminus: Angiogenin (145 aa).

An N-terminal signal peptide occupies residues 1 to 24 (MAISPGPLFLIFVLGLVVIPPTLA). Pyrrolidone carboxylic acid is present on glutamine 25. Catalysis depends on histidine 37, which acts as the Proton acceptor. TRNA-binding residues include arginine 45 and aspartate 46. 3 disulfides stabilise this stretch: cysteine 50-cysteine 104, cysteine 63-cysteine 115, and cysteine 81-cysteine 130. The Nucleolar localization signal signature appears at 55 to 59 (KRRSL). The tRNA site is built by cysteine 104 and valine 126. Catalysis depends on histidine 137, which acts as the Proton donor.

It belongs to the pancreatic ribonuclease family. In terms of assembly, homodimer. Interacts with RNH1; inhibiting ANG ribonuclease activity. Interacts with PCNA.

The protein resides in the secreted. Its subcellular location is the nucleus. The protein localises to the nucleolus. It localises to the cytoplasm. It is found in the stress granule. With respect to regulation, has weak tRNA ribonuclease activity by itself due to partial autoinhibition by its C-terminus (residues 139-145), which folds into a short alpha-helix that partially occludes the substrate-binding site. In absence of stress, the ribonuclease activity is inhibited by RNH1 in the cytoplasm. In response to stress, dissociates from RNH1 in the cytoplasm and associates with cytoplasmic ribosomes with vacant A-sites: ribosomes directly activate the tRNA ribonuclease activity of ANG by refolding the C-terminal alpha-helix. In response to stress, the angiogenic activity of ANG is inhibited by RNH1 in the nucleus. In terms of biological role, secreted ribonuclease that can either promote or restrict cell proliferation of target cells, depending on the context. Endocytosed in target cells via its receptor PLXNB2 and translocates to the cytoplasm or nucleus. Under stress conditions, localizes to the cytoplasm and promotes the assembly of stress granules (SGs): specifically cleaves a subset of tRNAs within anticodon loops to produce tRNA-derived stress-induced fragments (tiRNAs), resulting in translation repression and inhibition of cell proliferation. tiRNas also prevent formation of apoptosome, thereby promoting cell survival. Preferentially cleaves RNAs between a pyrimidine and an adenosine residue, suggesting that it cleaves the anticodon loop of tRNA(Ala) (32-UUAGCAU-38) after positions 33 and 36. Cleaves a subset of tRNAs, including tRNA(Ala), tRNA(Glu), tRNA(Gly), tRNA(Lys), tRNA(Val), tRNA(His), tRNA(Asp) and tRNA(Sec). Under growth conditions and in differentiated cells, translocates to the nucleus and stimulates ribosomal RNA (rRNA) transcription, including that containing the initiation site sequences of 45S rRNA, thereby promoting cell growth and proliferation. Angiogenin induces vascularization of normal and malignant tissues via its ability to promote rRNA transcription. Involved in hematopoietic stem and progenitor cell (HSPC) growth and survival by promoting rRNA transcription in growth conditions and inhibiting translation in response to stress, respectively. Mediates the crosstalk between myeloid and intestinal epithelial cells to protect the intestinal epithelial barrier integrity: secreted by myeloid cells and promotes intestinal epithelial cells proliferation and survival. Also mediates osteoclast-endothelial cell crosstalk in growing bone: produced by osteoclasts and protects the neighboring vascular cells against senescence by promoting rRNA transcription. The protein is Angiogenin of Mus musculus (Mouse).